Reading from the N-terminus, the 963-residue chain is Transcription factor cbf12 (963 aa).

Disordered regions lie at residues 130–207 and 248–289; these read NPSN…SQGL and VNMN…PPQK. 2 stretches are compositionally biased toward polar residues: residues 143–207 and 249–289; these read FENN…SQGL and NMNS…PPQK.

This sequence belongs to the Su(H) family.

It localises to the nucleus. In terms of biological role, transcription factor which function may be to trigger the increase of adhesion at stationary phase, possibly by counteracting or replacing cbf11 at the respective promoters. May also play a cbf11-antagonistic role in the regulation of a number of other important processes such as extracellular material production, colony morphogenesis, ploidy maintenance, or meiosis. This is Transcription factor cbf12 (cbf12) from Schizosaccharomyces pombe (strain 972 / ATCC 24843) (Fission yeast).